The sequence spans 293 residues: ADP-forming sulfoacetate-CoA ligase subunit SauD (293 aa).

CoA-binding positions include 17 to 20, Lys43, and 96 to 98; these read TGKE and IAD. The active-site Tele-phosphohistidine intermediate is His251.

The protein belongs to the succinate/malate CoA ligase alpha subunit family. In terms of assembly, forms a complex with SauC.

It catalyses the reaction sulfoacetate + ATP + CoA = sulfoacetyl-CoA + ADP + phosphate. In terms of biological role, involved in the degradation of sulfoacetate. Catalyzes the CoA- and ATP-dependent conversion of sulfoacetate to sulfoacetyl-CoA and ADP. Cannot use other sulfonic and carboxylic acids, and shows only residual activity with 3-sulfopropanoate and malonic acid. This is ADP-forming sulfoacetate-CoA ligase subunit SauD from Bilophila wadsworthia (strain 3_1_6).